The chain runs to 113 residues: Dynein light chain Tctex-type 1 (113 aa).

M1 carries the post-translational modification N-acetylmethionine. The interaction with GNB1 stretch occupies residues 41 to 113 (QWTTNVLEQT…CIVSTFGLSI (73 aa)).

It belongs to the dynein light chain Tctex-type family. As to quaternary structure, homodimer. The cytoplasmic dynein 1 complex consists of two catalytic heavy chains (HCs) and a number of non-catalytic subunits presented by intermediate chains (ICs), light intermediate chains (LICs) and light chains (LCs); the composition seems to vary in respect to the IC, LIC and LC composition. The heavy chain homodimer serves as a scaffold for the probable homodimeric assembly of the respective non-catalytic subunits. The ICs and LICs bind directly to the HC dimer and the LCs assemble on the IC dimer. DYNLT1 and DYNLT3 compete for association with dynein IC (DYNC1I1 or DYNC1I2). Self-associates. Interacts with RHO. Interacts with DYNC1I1 and DYNC1I2. Interacts with DOC2A, DOC2B and SCN10A. Interacts with PVR. Interacts with SVIL isoform 2. Interacts with GNB1; the interaction occurs in presence of guanine nucleotide-binding protein G(T) subunit gamma; the interaction diminishes the association of DYNLT1 with dynein IC (DYNC1I1 or DYNC1I2). Interacts with GNB2, GNB3 and GNB5; the interactions occur in presence of guanine nucleotide-binding protein G(T) subunit gamma. Interacts with ACVR2B and ARHGEF2. Interacts with DNAI4. Interacts with CFAP61. Post-translationally, phosphorylated by BMPR2. The phosphorylation status is proposed to regulate the association with the cytoplasmic dynein complex and may have role in cytoplasmic dynein cargo release. As to expression, high level in testis (germ cell-specific). Expressed in sperm (at protein level). 200-fold lower in liver, brain, heart, spleen, and kidney. Levels in thymus and two embryonal carcinoma cell lines were several-fold higher than this low constitutive level.

The protein resides in the golgi apparatus. It is found in the cytoplasm. Its subcellular location is the cytoskeleton. It localises to the spindle. Its function is as follows. Acts as one of several non-catalytic accessory components of the cytoplasmic dynein 1 complex that are thought to be involved in linking dynein to cargos and to adapter proteins that regulate dynein function. Cytoplasmic dynein 1 acts as a motor for the intracellular retrograde motility of vesicles and organelles along microtubules. Binds to transport cargos and is involved in apical cargo transport such as rhodopsin-bearing vesicles in polarized epithelia. May also be a accessory component of axonemal dynein. Plays an important role in male germ cell development and function. Candidate for involvement in male sterility. In terms of biological role, plays a role in neuronal morphogenesis; the function is independent of cytoplasmic dynein and seems to be coupled to regulation of the actin cytoskeleton by enhancing Rac1 activity. The function in neurogenesis may be regulated by association with a G-protein beta-gamma dimer. May function as a receptor-independent activator of heterotrimeric G-protein signaling; the activation appears to be independent of a nucleotide exchange. Plays a role in regulating neurogenesis; inhibits the genesis of neurons from precursor cells during cortical development presumably by antagonizing ARHGEF2. Unrelated to the role in retrograde microtubule-associated movement may play a role in the dimerization of cytoplasmic proteins/domains such as for ACVR2B. Binds to the cytoplasmic domain of ACVR2B and, in vitro, inhibits ACVR2B signaling. Involved in the regulation of mitotic spindle orientation. In Mus musculus (Mouse), this protein is Dynein light chain Tctex-type 1 (Dynlt1).